Reading from the N-terminus, the 193-residue chain is Orotate phosphoribosyltransferase (193 aa).

Residues arginine 85, lysine 89, and 111–119 contribute to the 5-phospho-alpha-D-ribose 1-diphosphate site; that span reads DDVLTTGKS. Residues threonine 115 and arginine 143 each coordinate orotate.

Belongs to the purine/pyrimidine phosphoribosyltransferase family. PyrE subfamily. In terms of assembly, homodimer. Requires Mg(2+) as cofactor.

It catalyses the reaction orotidine 5'-phosphate + diphosphate = orotate + 5-phospho-alpha-D-ribose 1-diphosphate. It participates in pyrimidine metabolism; UMP biosynthesis via de novo pathway; UMP from orotate: step 1/2. In terms of biological role, catalyzes the transfer of a ribosyl phosphate group from 5-phosphoribose 1-diphosphate to orotate, leading to the formation of orotidine monophosphate (OMP). This Pyrobaculum aerophilum (strain ATCC 51768 / DSM 7523 / JCM 9630 / CIP 104966 / NBRC 100827 / IM2) protein is Orotate phosphoribosyltransferase.